Here is a 574-residue protein sequence, read N- to C-terminus: ATP synthase subunit beta, mitochondrial (574 aa).

The transit peptide at 1-26 (MLSSVRLAALRAGKTNSVFQAVRAFA) directs the protein to the mitochondrion. 183–190 (GGAGVGKT) lines the ATP pocket.

This sequence belongs to the ATPase alpha/beta chains family. As to quaternary structure, F-type ATPases have 2 components, CF(1) - the catalytic core - and CF(0) - the membrane proton channel. CF(1) has five subunits: alpha(3), beta(3), gamma(1), delta(1), epsilon(1). CF(0) has three main subunits: a, b and c.

The protein localises to the mitochondrion. It localises to the mitochondrion inner membrane. The catalysed reaction is ATP + H2O + 4 H(+)(in) = ADP + phosphate + 5 H(+)(out). Mitochondrial membrane ATP synthase (F(1)F(0) ATP synthase or Complex V) produces ATP from ADP in the presence of a proton gradient across the membrane which is generated by electron transport complexes of the respiratory chain. F-type ATPases consist of two structural domains, F(1) - containing the extramembraneous catalytic core, and F(0) - containing the membrane proton channel, linked together by a central stalk and a peripheral stalk. During catalysis, ATP synthesis in the catalytic domain of F(1) is coupled via a rotary mechanism of the central stalk subunits to proton translocation. Subunits alpha and beta form the catalytic core in F(1). Rotation of the central stalk against the surrounding alpha(3)beta(3) subunits leads to hydrolysis of ATP in three separate catalytic sites on the beta subunits. The protein is ATP synthase subunit beta, mitochondrial (ATP2) of Chlamydomonas reinhardtii (Chlamydomonas smithii).